A 143-amino-acid polypeptide reads, in one-letter code: HTH-type transcriptional regulator BudR (143 aa).

The HTH lysR-type domain occupies 1 to 58 (MELRYLRYFVAVARERHFTRAAKALGISQPPLSQQIKRLEEEVGTPLFRRLTRGVELT). The segment at residues 18–37 (FTRAAKALGISQPPLSQQIK) is a DNA-binding region (H-T-H motif).

Belongs to the LysR transcriptional regulatory family.

Functionally, regulator of the budABC operon for 2,3-butanediol synthesis. This chain is HTH-type transcriptional regulator BudR (budR), found in Klebsiella aerogenes (Enterobacter aerogenes).